A 231-amino-acid polypeptide reads, in one-letter code: Aquaporin Z (231 aa).

The next 2 membrane-spanning stretches (helical) occupy residues 9-29 (CFGTFWLVFGGCGSAVLAAGF) and 34-54 (IGFAGVALAFGLTVLTMAFAV). The NPA 1 signature appears at 63 to 65 (NPA). Transmembrane regions (helical) follow at residues 82-102 (VGYVIAQVVGGIVAAALLYLI), 129-149 (YSMLSALVVELVLSAGFLLVI), and 156-176 (FAPAGFAPIAIGLALTLIHLI). The short motif at 186 to 188 (NPA) is the NPA 2 element. A helical transmembrane segment spans residues 202-222 (LEQLWFFWVVPIVGGIIGGLI).

It belongs to the MIP/aquaporin (TC 1.A.8) family. Homotetramer.

The protein localises to the cell inner membrane. It carries out the reaction H2O(in) = H2O(out). In terms of biological role, channel that permits osmotically driven movement of water in both directions. It is involved in the osmoregulation and in the maintenance of cell turgor during volume expansion in rapidly growing cells. It mediates rapid entry or exit of water in response to abrupt changes in osmolarity. This is Aquaporin Z from Escherichia coli O157:H7.